Consider the following 412-residue polypeptide: Lipoyl synthase, mitochondrial (412 aa).

Residues Cys127, Cys132, Cys138, Cys159, Cys163, Cys166, and Ser375 each coordinate [4Fe-4S] cluster. In terms of domain architecture, Radical SAM core spans 142–364 (SDDEGTATAT…EKEAMDMGFL (223 aa)).

The protein belongs to the radical SAM superfamily. Lipoyl synthase family. [4Fe-4S] cluster serves as cofactor.

The protein resides in the mitochondrion. It carries out the reaction [[Fe-S] cluster scaffold protein carrying a second [4Fe-4S](2+) cluster] + N(6)-octanoyl-L-lysyl-[protein] + 2 oxidized [2Fe-2S]-[ferredoxin] + 2 S-adenosyl-L-methionine + 4 H(+) = [[Fe-S] cluster scaffold protein] + N(6)-[(R)-dihydrolipoyl]-L-lysyl-[protein] + 4 Fe(3+) + 2 hydrogen sulfide + 2 5'-deoxyadenosine + 2 L-methionine + 2 reduced [2Fe-2S]-[ferredoxin]. Its pathway is protein modification; protein lipoylation via endogenous pathway; protein N(6)-(lipoyl)lysine from octanoyl-[acyl-carrier-protein]: step 2/2. Functionally, catalyzes the radical-mediated insertion of two sulfur atoms into the C-6 and C-8 positions of the octanoyl moiety bound to the lipoyl domains of lipoate-dependent enzymes, thereby converting the octanoylated domains into lipoylated derivatives. The chain is Lipoyl synthase, mitochondrial from Leishmania infantum.